Consider the following 73-residue polypeptide: Aminopeptidase G (73 aa).

Residues 39–73 (GRRAASSSWPGRGSSRRWRPGRRTGAAARGCWRAP) form a disordered region. Composition is skewed to low complexity over residues 42 to 51 (AASSSWPGRG) and 61 to 73 (RTGA…WRAP).

Belongs to the peptidase M1 family. Zn(2+) is required as a cofactor.

The protein localises to the cytoplasm. Hydrolyzes preferentially the N-terminal glycine and can also hydrolyze other amino acids which are used by PepN but is unable to hydrolyze basic amino acids. This chain is Aminopeptidase G (pepG), found in Streptomyces lividans.